Here is a 275-residue protein sequence, read N- to C-terminus: Large ribosomal subunit protein uL2 (275 aa).

Positions 36–49 (TQSSTAGRNNNGRI) are enriched in polar residues. 2 disordered regions span residues 36–59 (TQSS…GGHK) and 224–275 (AMNP…RHKR). Residues 50-59 (TTRHKGGGHK) are compositionally biased toward basic residues.

Belongs to the universal ribosomal protein uL2 family. As to quaternary structure, part of the 50S ribosomal subunit. Forms a bridge to the 30S subunit in the 70S ribosome.

Its function is as follows. One of the primary rRNA binding proteins. Required for association of the 30S and 50S subunits to form the 70S ribosome, for tRNA binding and peptide bond formation. It has been suggested to have peptidyltransferase activity; this is somewhat controversial. Makes several contacts with the 16S rRNA in the 70S ribosome. This chain is Large ribosomal subunit protein uL2, found in Burkholderia vietnamiensis (strain G4 / LMG 22486) (Burkholderia cepacia (strain R1808)).